The following is a 63-amino-acid chain: Large ribosomal subunit protein bL35 (63 aa).

Belongs to the bacterial ribosomal protein bL35 family.

The chain is Large ribosomal subunit protein bL35 from Campylobacter jejuni (strain RM1221).